We begin with the raw amino-acid sequence, 506 residues long: MSFSVEVLAGIAIELQRGIGHQDRFQRLITTLRQVLACDASALLRYESRQFIPLAIDGLAQDVLGRRFTLEGHPRLEAIARAGDVVRFPADSDLPDPYDGLIPGQESLKVHACVGLPLFAGQNLIGALTLDAMTPEQFEVFSDEELRLVAALAAGALSNALLIEQLESQNMLPGSSGVFEPIKETHMIGLSPAMTQLKKEIEIVAGSDLNVLIGGETGTGKELVAKAIHQGSPRAVNPLVYLNCAALPESVAESELFGHVKGAFTGAISNRSGKFEMADNGTLFLDEIGELSLALQAKLLRVLQYGDIQRVGDDRSLRVDVRVLAATNRDLREEVLAGRFRADLFHRLSVFPLFVPPLHERGDDVVLLAGYFCEQCRLRLGLSRVVLSPDARRHLLNYGWPGNVRELEHAIHRAVVLARATRAGDEVVLEAQHFALSEDVLPAPPAESFLALPACRNLRESTENFQREMIRQALAQNNHNWAASARALETDVANLHRLAKRLGLKD.

4-aspartylphosphate is present on aspartate 57. One can recognise a Sigma-54 factor interaction domain in the interval 187–416; that stretch reads MIGLSPAMTQ…LEHAIHRAVV (230 aa). Residues 215-222 and 278-287 contribute to the ATP site; these read GETGTGKE and ADNGTLFLDE. The H-T-H motif DNA-binding region spans 481–500; sequence WAASARALETDVANLHRLAK.

The protein operates within nitrogen metabolism; nitric oxide reduction. Required for the expression of anaerobic nitric oxide (NO) reductase, acts as a transcriptional activator for at least the norVW operon. Activation also requires sigma-54. The chain is Anaerobic nitric oxide reductase transcription regulator NorR from Salmonella heidelberg (strain SL476).